The sequence spans 216 residues: Thioredoxin-like 2, chloroplastic (216 aa).

A chloroplast-targeting transit peptide spans 1–58 (MAEALLPLPRRLVVTASTPACSSASSSTSPSPHCLLSRANPRPPRLAAPSPPRHRRLK). Residues 19–40 (PACSSASSSTSPSPHCLLSRAN) show a composition bias toward low complexity. Positions 19–70 (PACSSASSSTSPSPHCLLSRANPRPPRLAAPSPPRHRRLKAHAAVSDKSEQP) are disordered. Pro residues predominate over residues 41–51 (PRPPRLAAPSP). The region spanning 61–188 (AAVSDKSEQP…LKDAIAVHNT (128 aa)) is the Thioredoxin domain. Active-site nucleophile residues include C111 and C114. C111 and C114 are oxidised to a cystine.

The protein belongs to the thioredoxin family.

The protein localises to the plastid. The protein resides in the chloroplast. Probable thiol-disulfide oxidoreductase that may participate in various redox reactions. The protein is Thioredoxin-like 2, chloroplastic of Oryza sativa subsp. japonica (Rice).